The primary structure comprises 116 residues: Protein Wnt-5a (116 aa).

A lipid anchor (O-palmitoleoyl serine; by PORCN) is attached at Ser1. N-linked (GlcNAc...) asparagine glycans are attached at residues Asn69 and Asn83. Cys82 and Cys97 are oxidised to a cystine.

The protein belongs to the Wnt family. Palmitoleoylation is required for efficient binding to frizzled receptors. Depalmitoleoylation leads to Wnt signaling pathway inhibition.

Its subcellular location is the secreted. The protein resides in the extracellular space. It localises to the extracellular matrix. In terms of biological role, ligand for members of the frizzled family of seven transmembrane receptors. Can activate or inhibit canonical Wnt signaling, depending on receptor context. Required during embryogenesis for extension of the primary anterior-posterior axis. This is Protein Wnt-5a (WNT-5A) from Plestiodon skiltonianus (Western skink).